We begin with the raw amino-acid sequence, 95 residues long: Basic phospholipase A2 (95 aa).

Residues lysine 7 and lysine 10 are each lipidated (N6-palmitoyl lysine). Ca(2+)-binding residues include tyrosine 23, glycine 25, and glycine 27. Disulfide bonds link cysteine 24/cysteine 40, cysteine 39/cysteine 77, cysteine 46/cysteine 70, cysteine 53/cysteine 63, and cysteine 57/cysteine 68. Residue histidine 43 is part of the active site. Aspartate 44 serves as a coordination point for Ca(2+). Aspartate 71 is a catalytic residue.

As to quaternary structure, monomer. The cofactor is Ca(2+). Expressed by the venom gland.

The protein resides in the secreted. The enzyme catalyses a 1,2-diacyl-sn-glycero-3-phosphocholine + H2O = a 1-acyl-sn-glycero-3-phosphocholine + a fatty acid + H(+). Its function is as follows. PLA2 catalyzes the calcium-dependent hydrolysis of the 2-acyl groups in 3-sn-phosphoglycerides. Induces local and systemic myotoxicity in an intramuscular mouse model. Induces local edema in a mouse footpad assay. Does not exhibit any anticoagulant effects. Does not mediate an antibacterial effect against Gram-negative and Gram-positive bacteria. This is Basic phospholipase A2 from Agkistrodon piscivorus leucostoma (Western cottonmouth).